Consider the following 514-residue polypeptide: Bifunctional purine biosynthesis protein PurH (514 aa).

The MGS-like domain maps to 1–146; sequence MARLALLSVS…KNFAHLAVLC (146 aa).

Belongs to the PurH family.

The catalysed reaction is (6R)-10-formyltetrahydrofolate + 5-amino-1-(5-phospho-beta-D-ribosyl)imidazole-4-carboxamide = 5-formamido-1-(5-phospho-D-ribosyl)imidazole-4-carboxamide + (6S)-5,6,7,8-tetrahydrofolate. It carries out the reaction IMP + H2O = 5-formamido-1-(5-phospho-D-ribosyl)imidazole-4-carboxamide. Its pathway is purine metabolism; IMP biosynthesis via de novo pathway; 5-formamido-1-(5-phospho-D-ribosyl)imidazole-4-carboxamide from 5-amino-1-(5-phospho-D-ribosyl)imidazole-4-carboxamide (10-formyl THF route): step 1/1. It participates in purine metabolism; IMP biosynthesis via de novo pathway; IMP from 5-formamido-1-(5-phospho-D-ribosyl)imidazole-4-carboxamide: step 1/1. In Nostoc punctiforme (strain ATCC 29133 / PCC 73102), this protein is Bifunctional purine biosynthesis protein PurH.